We begin with the raw amino-acid sequence, 591 residues long: N-acetylgalactosaminyltransferase 7 (591 aa).

Topologically, residues 1 to 11 are cytoplasmic; that stretch reads MRVSTIRSGRI. A helical; Signal-anchor for type II membrane protein membrane pass occupies residues 12 to 29; it reads CRLALCLLVLLPLLYLLA. N30 carries an N-linked (GlcNAc...) asparagine glycan. Over 30-591 the chain is Lumenal; it reads NWSDHHKRVQ…WWFKEIRPRW (562 aa). A disordered region spans residues 68–100; sequence DGLGNFEPKDVKPRSGPGENGEAHSLSPDKKHM. 5 disulfide bridges follow: C132–C367, C358–C441, C479–C496, C519–C532, and C558–C573. A catalytic subdomain A region spans residues 141-251; that stretch reads LPRTSVIIVF…TNWLPPLLAP (111 aa). Substrate contacts are provided by D182 and R212. Mn(2+)-binding residues include D235 and H237. Positions 313 to 375 are catalytic subdomain B; the sequence is PYRSPTHAGG…PCSRVGHVYR (63 aa). Substrate is bound at residue W344. H372 lines the Mn(2+) pocket. Substrate is bound by residues R375 and Y380. The Ricin B-type lectin domain maps to 466-585; that stretch reads LHWGELRSVA…NDSYQQWWFK (120 aa). N576 carries an N-linked (GlcNAc...) asparagine glycan.

The protein belongs to the glycosyltransferase 2 family. GalNAc-T subfamily. Mn(2+) serves as cofactor. In terms of tissue distribution, expressed in developing oocytes and egg chambers. During embryonic stages 9-11, expressed in the primordium of the foregut, midgut and hindgut. Expressed in the salivary glands from embryonic stage 12 onwards. During embryonic stages 12-13, expressed in the posterior midgut and hindgut. During embryonic stages 14-15, expression continues in the hindgut. During embryonic stages 16-17, expressed in the antennomaxillary complex. In third instar larvae, ubiquitously expressed in wing, with increased expression in the notum and ventral wing pouch, eye-antennal, leg and haltere imaginal disks.

Its subcellular location is the golgi apparatus membrane. It carries out the reaction L-seryl-[protein] + UDP-N-acetyl-alpha-D-galactosamine = a 3-O-[N-acetyl-alpha-D-galactosaminyl]-L-seryl-[protein] + UDP + H(+). The catalysed reaction is L-threonyl-[protein] + UDP-N-acetyl-alpha-D-galactosamine = a 3-O-[N-acetyl-alpha-D-galactosaminyl]-L-threonyl-[protein] + UDP + H(+). It functions in the pathway protein modification; protein glycosylation. Its function is as follows. Glycopeptide transferase involved in O-linked oligosaccharide biosynthesis, which catalyzes the transfer of an N-acetyl-D-galactosamine residue to an already glycosylated peptide. In contrast to other proteins of the family, it does not act as a peptide transferase that transfers GalNAc onto serine or threonine residue on the protein receptor, but instead requires the prior addition of a GalNAc on a peptide before adding additional GalNAc moieties. Some peptide transferase activity is however not excluded, considering that its appropriate peptide substrate may remain unidentified. Prefers the monoglycosylated Muc5AC-3 as substrate. Might have a role in protein O-glycosylation in the Golgi and thereby in establishing and/or maintaining a proper secretory apparatus structure. The polypeptide is N-acetylgalactosaminyltransferase 7 (Drosophila melanogaster (Fruit fly)).